The sequence spans 77 residues: Metallocarboxypeptidase inhibitor (77 aa).

An N-terminal signal peptide occupies residues 1-32 (MAQKFTILFTILLVVIAAQDVMAQDATLTKLF). Gln33 is modified (pyrrolidone carboxylic acid). Cystine bridges form between Cys39-Cys55, Cys43-Cys58, and Cys49-Cys65. A propeptide spans 70–77 (GRAMAIGV) (hydrophobic peptide).

The protein to potato MCPI. In terms of tissue distribution, ovaries.

Functionally, may play a defensive role against insect attacks. The protein is Metallocarboxypeptidase inhibitor of Solanum lycopersicum (Tomato).